A 181-amino-acid chain; its full sequence is NAD(P)H-quinone oxidoreductase subunit I, chloroplastic (181 aa).

2 consecutive 4Fe-4S ferredoxin-type domains span residues 52 to 81 (GRIH…VDWE) and 92 to 121 (KSYS…MTEE). Residues Cys61, Cys64, Cys67, Cys71, Cys101, Cys104, Cys107, and Cys111 each coordinate [4Fe-4S] cluster.

Belongs to the complex I 23 kDa subunit family. As to quaternary structure, NDH is composed of at least 16 different subunits, 5 of which are encoded in the nucleus. It depends on [4Fe-4S] cluster as a cofactor.

It is found in the plastid. The protein localises to the chloroplast thylakoid membrane. The enzyme catalyses a plastoquinone + NADH + (n+1) H(+)(in) = a plastoquinol + NAD(+) + n H(+)(out). The catalysed reaction is a plastoquinone + NADPH + (n+1) H(+)(in) = a plastoquinol + NADP(+) + n H(+)(out). Functionally, NDH shuttles electrons from NAD(P)H:plastoquinone, via FMN and iron-sulfur (Fe-S) centers, to quinones in the photosynthetic chain and possibly in a chloroplast respiratory chain. The immediate electron acceptor for the enzyme in this species is believed to be plastoquinone. Couples the redox reaction to proton translocation, and thus conserves the redox energy in a proton gradient. In Staurastrum punctulatum (Green alga), this protein is NAD(P)H-quinone oxidoreductase subunit I, chloroplastic.